A 131-amino-acid polypeptide reads, in one-letter code: Norrin (131 aa).

The first 24 residues, 1–24, serve as a signal peptide directing secretion; that stretch reads MRNHVLAASISMLSLLAIMGDTDS. 4 disulfide bridges follow: Cys-37–Cys-94, Cys-53–Cys-108, Cys-63–Cys-124, and Cys-67–Cys-126. The 94-residue stretch at 37–130 folds into the CTCK domain; that stretch reads CMRHHYVDSI…ILSCHCEECS (94 aa).

As to quaternary structure, homodimer; disulfide-linked. Component of a complex, at least composed of TSPAN12, FZD4, LRP5/6 and norrin (NDP). Binds FZD4 with high affinity. Interacts with LRP6 (via Beta-propellers 1 and 2). As to expression, expressed in the outer nuclear, inner nuclear and ganglion cell layers of the retina.

Its subcellular location is the secreted. Its function is as follows. Activates the canonical Wnt signaling pathway through FZD4 and LRP5 coreceptor. Plays a central role in retinal vascularization by acting as a ligand for FZD4 that signals via stabilizing beta-catenin (CTNNB1) and activating LEF/TCF-mediated transcriptional programs. Acts in concert with TSPAN12 to activate FZD4 independently of the Wnt-dependent activation of FZD4, suggesting the existence of a Wnt-independent signaling that also promote accumulation the beta-catenin (CTNNB1). May be involved in a pathway that regulates neural cell differentiation and proliferation. Possible role in neuroectodermal cell-cell interaction. In Mus musculus (Mouse), this protein is Norrin (Ndp).